Here is a 102-residue protein sequence, read N- to C-terminus: Small ribosomal subunit protein uS10 (102 aa).

Belongs to the universal ribosomal protein uS10 family. As to quaternary structure, part of the 30S ribosomal subunit.

Functionally, involved in the binding of tRNA to the ribosomes. The polypeptide is Small ribosomal subunit protein uS10 (Oenococcus oeni (strain ATCC BAA-331 / PSU-1)).